We begin with the raw amino-acid sequence, 537 residues long: Protoporphyrinogen oxidase 1, chloroplastic (537 aa).

The transit peptide at 1 to 34 directs the protein to the chloroplast; the sequence is MELSLLRPTTQSLLPSFSKPNLRLNVYKPLRLRC. Ser35 is subject to N-acetylserine. FAD-binding positions include 63-68, 90-91, and 112-115; these read GGGISG, EA, and GPNS. Residues 256-268 are compositionally biased toward basic and acidic residues; it reads RKNAPKAERDPRL. Residues 256 to 275 form a disordered region; the sequence is RKNAPKAERDPRLPKPQGQT. Residue 511–513 participates in FAD binding; sequence VAL.

This sequence belongs to the protoporphyrinogen/coproporphyrinogen oxidase family. Protoporphyrinogen oxidase subfamily. FAD serves as cofactor. As to expression, expressed at high levels in the leaves and at low levels in the roots and floral buds.

The protein localises to the plastid. Its subcellular location is the chloroplast. It carries out the reaction protoporphyrinogen IX + 3 O2 = protoporphyrin IX + 3 H2O2. The protein operates within porphyrin-containing compound metabolism; protoporphyrin-IX biosynthesis; protoporphyrin-IX from protoporphyrinogen-IX: step 1/1. Its pathway is porphyrin-containing compound metabolism; chlorophyll biosynthesis. Inhibited by acifluorfen. Catalyzes the 6-electron oxidation of protoporphyrinogen-IX to form protoporphyrin-IX. This Arabidopsis thaliana (Mouse-ear cress) protein is Protoporphyrinogen oxidase 1, chloroplastic (PPOX1).